A 425-amino-acid chain; its full sequence is Alpha-(1,3)-fucosyltransferase C (425 aa).

Topologically, residues 1–37 (MYLGRVHCSFEVPGLLSGRVGHMSMAVRSVRLACGPR) are cytoplasmic. Residues 38 to 58 (GALLLLLLVLLGVLVVLHKVT) form a helical; Signal-anchor for type II membrane protein membrane-spanning segment. The Lumenal portion of the chain corresponds to 59 to 425 (QSPLLNQNKI…SCRLQSRIRL (367 aa)). N-linked (GlcNAc...) asparagine glycosylation is found at asparagine 187 and asparagine 230.

It belongs to the glycosyltransferase 10 family.

It is found in the golgi apparatus. The protein localises to the golgi stack membrane. The protein operates within protein modification; protein glycosylation. The sequence is that of Alpha-(1,3)-fucosyltransferase C (FucTC) from Drosophila melanogaster (Fruit fly).